A 201-amino-acid polypeptide reads, in one-letter code: Protease (201 aa).

Catalysis depends on residues H55, D72, and C122.

The protein belongs to the peptidase C5 family. Interacts with protease cofactor pVI-C; this interaction is necessary for protease activation.

It localises to the virion. The protein resides in the host nucleus. The catalysed reaction is Cleaves proteins of the adenovirus and its host cell at two consensus sites: -Yaa-Xaa-Gly-Gly-|-Xaa- and -Yaa-Xaa-Gly-Xaa-|-Gly- (in which Yaa is Met, Ile or Leu, and Xaa is any amino acid).. Requires DNA and protease cofactor for maximal activation. Inside nascent virions, becomes partially activated by binding to the viral DNA, allowing it to cleave the cofactor that binds to the protease and fully activates it. Actin, like the viral protease cofactor, seems to act as a cofactor in the cleavage of cytokeratin 18 and of actin itself. Cleaves viral precursor proteins (pTP, pIIIa, pVI, pVII, pVIII, and pX) inside newly assembled particles giving rise to mature virions. Protease complexed to its cofactor slides along the viral DNA to specifically locate and cleave the viral precursors. Mature virions have a weakened organization compared to the unmature virions, thereby facilitating subsequent uncoating. Without maturation, the particle lacks infectivity and is unable to uncoat. Late in adenovirus infection, in the cytoplasm, may participate in the cytoskeleton destruction. Cleaves host cell cytoskeletal keratins K7 and K18. This chain is Protease, found in Ovis aries (Sheep).